The primary structure comprises 435 residues: Adenylosuccinate synthetase (435 aa).

GTP-binding positions include 19 to 25 (GDEGKGK) and 49 to 51 (GHT). The active-site Proton acceptor is Asp-20. Mg(2+)-binding residues include Asp-20 and Gly-49. Residues 20–23 (DEGK), 47–50 (NAGH), Thr-139, Arg-153, Asn-233, Thr-248, and Arg-312 contribute to the IMP site. His-50 serves as the catalytic Proton donor. 308–314 (VTTGRKR) lines the substrate pocket. GTP is bound by residues Arg-314, 340-342 (KLD), and 422-424 (GVG).

This sequence belongs to the adenylosuccinate synthetase family. Homodimer. It depends on Mg(2+) as a cofactor.

Its subcellular location is the cytoplasm. It catalyses the reaction IMP + L-aspartate + GTP = N(6)-(1,2-dicarboxyethyl)-AMP + GDP + phosphate + 2 H(+). The protein operates within purine metabolism; AMP biosynthesis via de novo pathway; AMP from IMP: step 1/2. Functionally, plays an important role in the de novo pathway and in the salvage pathway of purine nucleotide biosynthesis. Catalyzes the first committed step in the biosynthesis of AMP from IMP. The chain is Adenylosuccinate synthetase from Brugia malayi (Filarial nematode worm).